The sequence spans 204 residues: Imidazoleglycerol-phosphate dehydratase (204 aa).

It belongs to the imidazoleglycerol-phosphate dehydratase family.

The protein localises to the cytoplasm. It catalyses the reaction D-erythro-1-(imidazol-4-yl)glycerol 3-phosphate = 3-(imidazol-4-yl)-2-oxopropyl phosphate + H2O. It participates in amino-acid biosynthesis; L-histidine biosynthesis; L-histidine from 5-phospho-alpha-D-ribose 1-diphosphate: step 6/9. The chain is Imidazoleglycerol-phosphate dehydratase from Albidiferax ferrireducens (strain ATCC BAA-621 / DSM 15236 / T118) (Rhodoferax ferrireducens).